We begin with the raw amino-acid sequence, 431 residues long: Enolase (431 aa).

(2R)-2-phosphoglycerate is bound at residue glutamine 167. The active-site Proton donor is glutamate 209. Aspartate 246, glutamate 289, and aspartate 316 together coordinate Mg(2+). Lysine 341, arginine 370, serine 371, and lysine 392 together coordinate (2R)-2-phosphoglycerate. The active-site Proton acceptor is the lysine 341.

It belongs to the enolase family. As to quaternary structure, component of the RNA degradosome, a multiprotein complex involved in RNA processing and mRNA degradation. Requires Mg(2+) as cofactor.

It is found in the cytoplasm. Its subcellular location is the secreted. It localises to the cell surface. It catalyses the reaction (2R)-2-phosphoglycerate = phosphoenolpyruvate + H2O. It participates in carbohydrate degradation; glycolysis; pyruvate from D-glyceraldehyde 3-phosphate: step 4/5. Its function is as follows. Catalyzes the reversible conversion of 2-phosphoglycerate (2-PG) into phosphoenolpyruvate (PEP). It is essential for the degradation of carbohydrates via glycolysis. The polypeptide is Enolase (Shewanella loihica (strain ATCC BAA-1088 / PV-4)).